Reading from the N-terminus, the 350-residue chain is Histidinol-phosphate aminotransferase (350 aa).

At lysine 220 the chain carries N6-(pyridoxal phosphate)lysine.

The protein belongs to the class-II pyridoxal-phosphate-dependent aminotransferase family. Histidinol-phosphate aminotransferase subfamily. As to quaternary structure, homodimer. It depends on pyridoxal 5'-phosphate as a cofactor.

The enzyme catalyses L-histidinol phosphate + 2-oxoglutarate = 3-(imidazol-4-yl)-2-oxopropyl phosphate + L-glutamate. The protein operates within amino-acid biosynthesis; L-histidine biosynthesis; L-histidine from 5-phospho-alpha-D-ribose 1-diphosphate: step 7/9. The sequence is that of Histidinol-phosphate aminotransferase from Macrococcus caseolyticus (strain JCSC5402) (Macrococcoides caseolyticum).